A 171-amino-acid polypeptide reads, in one-letter code: 3-hydroxydecanoyl-[acyl-carrier-protein] dehydratase (171 aa).

His-70 is an active-site residue.

It belongs to the thioester dehydratase family. FabA subfamily. In terms of assembly, homodimer.

It localises to the cytoplasm. It carries out the reaction a (3R)-hydroxyacyl-[ACP] = a (2E)-enoyl-[ACP] + H2O. The catalysed reaction is (3R)-hydroxydecanoyl-[ACP] = (2E)-decenoyl-[ACP] + H2O. It catalyses the reaction (2E)-decenoyl-[ACP] = (3Z)-decenoyl-[ACP]. Its pathway is lipid metabolism; fatty acid biosynthesis. In terms of biological role, necessary for the introduction of cis unsaturation into fatty acids. Catalyzes the dehydration of (3R)-3-hydroxydecanoyl-ACP to E-(2)-decenoyl-ACP and then its isomerization to Z-(3)-decenoyl-ACP. Can catalyze the dehydratase reaction for beta-hydroxyacyl-ACPs with saturated chain lengths up to 16:0, being most active on intermediate chain length. This chain is 3-hydroxydecanoyl-[acyl-carrier-protein] dehydratase, found in Pseudomonas syringae pv. syringae (strain B728a).